The following is a 94-amino-acid chain: Sulfocarbamoylase-1 (94 aa).

Homodimer. In terms of tissue distribution, ubiquitous (at protein level). Highest levels of expression in crystalline style followed by digestive gland and mantle.

Strongly inhibited by the serine proteinase inhibitor AEBSF. Weakly inhibited by the proteinase inhibitors BSF and aprotinin, and by EDTA. Not inhibited by the proteinase inhibitors bestatin, E-64 and leupeptin. Hydrolysis of sulfocarbamoyl esters of paralytic shellfish toxins. Does not hydrolyze the carbamoyl esters of paralytic shellfish toxins. Ester hydrolysis is significantly affected by the stereochemistry of sulfate esters at C-11 of the substrate toxin. This chain is Sulfocarbamoylase-1, found in Megangulus venulosus (Japanese bivalve).